The following is a 359-amino-acid chain: Lipopolysaccharide 1,6-galactosyltransferase (359 aa).

Positions 244 and 276 each coordinate UDP.

Belongs to the glycosyltransferase group 1 family. Glycosyltransferase 4 subfamily.

It carries out the reaction alpha-D-Glc-(1-&gt;3)-[L-alpha-D-Hep-(1-&gt;7)]-4-O-PO3(2-)-L-alpha-D-Hep-(1-&gt;3)-4-O-PO3(2-)-L-alpha-D-Hep-(1-&gt;5)-[alpha-Kdo-(2-&gt;4)]-alpha-Kdo-(2-&gt;6)-lipid A + UDP-alpha-D-galactose = alpha-D-Gal-(1-&gt;6)-alpha-D-Glc-(1-&gt;3)-[L-alpha-D-Hep-(1-&gt;7)]-4-O-PO3(2-)-L-alpha-D-Hep-(1-&gt;3)-4-O-PO3(2-)-L-alpha-D-Hep-(1-&gt;5)-[alpha-Kdo-(2-&gt;4)]-alpha-Kdo-(2-&gt;6)-lipid A + UDP + H(+). The protein operates within bacterial outer membrane biogenesis; LPS core biosynthesis. Functionally, galactosyltransferase involved in the biosynthesis of the core oligosaccharide region of lipopolysaccharide (LPS). Catalyzes the addition of galactose from UDP-galactose to the first glucose residue of the LPS outer core. The protein is Lipopolysaccharide 1,6-galactosyltransferase of Salmonella typhimurium (strain LT2 / SGSC1412 / ATCC 700720).